Here is a 438-residue protein sequence, read N- to C-terminus: 26S proteasome regulatory subunit 6A (438 aa).

The interval 1–24 is disordered; it reads MSTLEELDALDQSQQGGSSNNEGL. A compositionally biased stretch (polar residues) spans 11-22; it reads DQSQQGGSSNNE. 226 to 233 is a binding site for ATP; sequence GPPGTGKT.

It belongs to the AAA ATPase family.

It is found in the cytoplasm. The protein resides in the nucleus. Functionally, the 26S proteasome is involved in the ATP-dependent degradation of ubiquitinated proteins. The regulatory (or ATPase) complex confers ATP dependency and substrate specificity to the 26S complex. The polypeptide is 26S proteasome regulatory subunit 6A (tbp1) (Schizosaccharomyces pombe (strain 972 / ATCC 24843) (Fission yeast)).